A 385-amino-acid polypeptide reads, in one-letter code: MIQAPRIALIAGEASGDHLGAGLIQQLRLHFPTAEFIGIGGDMMRSAGCQTWFDTTELAVMGLTEVLRHLPRLLKIRREFCKRALAWHPDVLIGIDAPDFNLTVERWFKQRHIRTVHYVSPSIWAWREKRAAKIGASVDRVLCLFPMEPPIYARYGIDARFVGHPMADEIPYQTDRATARTALGLPLLSPVLAVLPGSRHSEISQLGNTFLEAAGQLSEHLPGLHVVIPAANTQCKPLLAEQLSRSTLPVMHSHLLDSSARTAMLAADVVLVASGTATLEAMLLKRPMVVAYKVAPLTYRIVKTLKLLKINRFALPNILAGEDLAPELIQKDCTAPALCAALLHWFKHPQKVTALQNRYLQLHTQLRRNASTRAAEAIAELLQQR.

Belongs to the LpxB family.

The enzyme catalyses a lipid X + a UDP-2-N,3-O-bis[(3R)-3-hydroxyacyl]-alpha-D-glucosamine = a lipid A disaccharide + UDP + H(+). It functions in the pathway bacterial outer membrane biogenesis; LPS lipid A biosynthesis. In terms of biological role, condensation of UDP-2,3-diacylglucosamine and 2,3-diacylglucosamine-1-phosphate to form lipid A disaccharide, a precursor of lipid A, a phosphorylated glycolipid that anchors the lipopolysaccharide to the outer membrane of the cell. The chain is Lipid-A-disaccharide synthase from Xylella fastidiosa (strain M12).